The sequence spans 370 residues: StAR-related lipid transfer protein 7, mitochondrial (370 aa).

A mitochondrion-targeting transit peptide spans 1–58; the sequence is MLPRRLLAAWLAGTRGGGLLALLANQCRFVTGLRVRRAQQIAQLYGRLYSESSRRVLL. Residues 86–111 adopt a coiled-coil conformation; the sequence is DEERIQEEELQRSINEMKRLEEMSNM. 2 disordered regions span residues 111 to 138 and 343 to 370; these read MFQS…EGKE and MSSE…IEYA. The START domain maps to 112–327; it reads FQSSGVQHHP…LHMATLKAKN (216 aa).

Post-translationally, proteolytically cleaved by PARL. In terms of tissue distribution, expressed in nasal epithelial cells. Down-regulated in nasal epithelial cells in patients experiencing an asthma exacerbation as compared to stable asthmatics and healthy controls.

The protein localises to the mitochondrion. May play a protective role in mucosal tissues by preventing exaggerated allergic responses. In Homo sapiens (Human), this protein is StAR-related lipid transfer protein 7, mitochondrial (STARD7).